The sequence spans 386 residues: Methylthioribose-1-phosphate isomerase (386 aa).

The Proton donor role is filled by Asp-261.

It belongs to the eIF-2B alpha/beta/delta subunits family. MtnA subfamily.

Its subcellular location is the cytoplasm. It localises to the nucleus. It catalyses the reaction 5-(methylsulfanyl)-alpha-D-ribose 1-phosphate = 5-(methylsulfanyl)-D-ribulose 1-phosphate. The protein operates within amino-acid biosynthesis; L-methionine biosynthesis via salvage pathway; L-methionine from S-methyl-5-thio-alpha-D-ribose 1-phosphate: step 1/6. Functionally, catalyzes the interconversion of methylthioribose-1-phosphate (MTR-1-P) into methylthioribulose-1-phosphate (MTRu-1-P). This Paracoccidioides brasiliensis (strain Pb03) protein is Methylthioribose-1-phosphate isomerase.